The following is a 95-amino-acid chain: Aspartyl/glutamyl-tRNA(Asn/Gln) amidotransferase subunit C (95 aa).

The protein belongs to the GatC family. In terms of assembly, heterotrimer of A, B and C subunits.

The enzyme catalyses L-glutamyl-tRNA(Gln) + L-glutamine + ATP + H2O = L-glutaminyl-tRNA(Gln) + L-glutamate + ADP + phosphate + H(+). It carries out the reaction L-aspartyl-tRNA(Asn) + L-glutamine + ATP + H2O = L-asparaginyl-tRNA(Asn) + L-glutamate + ADP + phosphate + 2 H(+). Allows the formation of correctly charged Asn-tRNA(Asn) or Gln-tRNA(Gln) through the transamidation of misacylated Asp-tRNA(Asn) or Glu-tRNA(Gln) in organisms which lack either or both of asparaginyl-tRNA or glutaminyl-tRNA synthetases. The reaction takes place in the presence of glutamine and ATP through an activated phospho-Asp-tRNA(Asn) or phospho-Glu-tRNA(Gln). The protein is Aspartyl/glutamyl-tRNA(Asn/Gln) amidotransferase subunit C of Thermodesulfovibrio yellowstonii (strain ATCC 51303 / DSM 11347 / YP87).